The chain runs to 348 residues: Major outer membrane protein P.IB (348 aa).

The first 19 residues, 1 to 19, serve as a signal peptide directing secretion; sequence MKKSLIALTLAALPVAATA.

This sequence belongs to the Gram-negative porin family. Homotrimer.

The protein resides in the cell outer membrane. Serves as a slightly cation selective porin. Major antigen on the gonococcal cell surface and it may have pathogenic properties in addition to its porin activity. The chain is Major outer membrane protein P.IB (porB) from Neisseria gonorrhoeae.